The sequence spans 540 residues: Probable protein kinase UbiB (540 aa).

The helical transmembrane segment at 24 to 44 (LLFEQPLLPWWLASLRLLMPW) threads the bilayer. The Protein kinase domain maps to 126-494 (RFDVEPLASA…RRRQGDRWAL (369 aa)). ATP-binding positions include 132 to 140 (LASASVAQV) and K154. D289 acts as the Proton acceptor in catalysis. Transmembrane regions (helical) follow at residues 496-516 (LLGAGLLGGGAVLAAGAAEAA) and 518-538 (LAAPAAWPAWLMLAAGLYLIV).

Belongs to the ABC1 family. UbiB subfamily.

Its subcellular location is the cell inner membrane. The protein operates within cofactor biosynthesis; ubiquinone biosynthesis [regulation]. Its function is as follows. Is probably a protein kinase regulator of UbiI activity which is involved in aerobic coenzyme Q (ubiquinone) biosynthesis. The chain is Probable protein kinase UbiB from Pseudomonas putida (strain GB-1).